The sequence spans 843 residues: Speckle targeted PIP5K1A-regulated poly(A) polymerase (843 aa).

The Matrin-type zinc finger occupies 25–55; that stretch reads FRCLLCGVNIPNRPSLTDHLSGRRHVRLHEE. One can recognise an RRM domain in the interval 54–126; the sequence is EERDKRNQQQ…ALEEPQIKLS (73 aa). Over residues 134-146 the composition is skewed to basic residues; the sequence is PREKKEFQRKKGG. The interval 134-157 is disordered; sequence PREKKEFQRKKGGSPRTLQPPDPE. An ATP-binding site is contributed by Ser-215. Residues Asp-226 and Asp-228 each contribute to the Mg(2+) site. Asp-226 and Asp-228 together coordinate UTP. The segment covering 241-255 has biased composition (basic and acidic residues); it reads VEGKAEKEIQNREES. Residues 241–292 form a disordered region; the sequence is VEGKAEKEIQNREESSTDMEVSMEDPETERKEEEMEIGNSKNDEDEDVTPGL. Residue Asn-354 coordinates ATP. UTP is bound by residues Asn-354, Arg-376, Tyr-398, and His-516. The PAP-associated domain occupies 456 to 516; sequence SLSSLLSEFF…NIQDPFELSH (61 aa). The tract at residues 564–837 is KA1; binds the bulging loops of U6 snRNA but is dispensable for terminal uridylyltransferase activity; sequence PPTERECVGR…YLPRMVAQIQ (274 aa). The segment at 653–691 is disordered; it reads QNNTKEASKQKSIFKTEEGMTESARRKREMTEPCMSDMT. A compositionally biased stretch (basic and acidic residues) spans 658–670; the sequence is EASKQKSIFKTEE.

It belongs to the DNA polymerase type-B-like family. As to quaternary structure, associates with the cleavage and polyadenylation specificity factor (CPSF) complex. Requires Mg(2+) as cofactor. The cofactor is Mn(2+).

The protein localises to the nucleus. It is found in the nucleolus. Its subcellular location is the nucleus speckle. The catalysed reaction is RNA(n) + UTP = RNA(n)-3'-uridine ribonucleotide + diphosphate. It carries out the reaction RNA(n) + ATP = RNA(n)-3'-adenine ribonucleotide + diphosphate. Poly(A) polymerase that creates the 3'-poly(A) tail of specific pre-mRNAs. In addition to polyadenylation, it is also required for the 3'-end cleavage of pre-mRNAs: binds to the 3'UTR of targeted pre-mRNAs and promotes the recruitment and assembly of the CPSF complex on the 3'UTR of pre-mRNAs. In addition to adenylyltransferase activity, also has uridylyltransferase activity. However, the ATP ratio is higher than UTP in cells, suggesting that it functions primarily as a poly(A) polymerase. The sequence is that of Speckle targeted PIP5K1A-regulated poly(A) polymerase (tut1) from Xenopus tropicalis (Western clawed frog).